Reading from the N-terminus, the 112-residue chain is DNA-binding protein Bv3F (112 aa).

A disordered region spans residues 65 to 92 (KRNSKRMSTVPKYRDPATGKTWSGRGRQ). 2 consecutive DNA-binding regions follow at residues 89 to 94 (RGRQPA) and 89 to 95 (RGRQPAW).

This sequence belongs to the histone-like protein H-NS family. In terms of assembly, homodimer that oligomerizes on DNA into higher-order complexes that form bridges between disparate regions of DNA compacting it.

It localises to the cytoplasm. It is found in the nucleoid. Its function is as follows. A DNA-binding protein implicated in transcriptional repression and chromosome organization and compaction. Binds in the minor groove of AT-rich DNA. Binds nucleation sites in AT-rich DNA and bridges them, forming higher-order nucleoprotein complexes and condensing the chromosome. As many horizontally transferred genes are AT-rich, it plays a central role in silencing foreign genes. This Burkholderia vietnamiensis (strain G4 / LMG 22486) (Burkholderia cepacia (strain R1808)) protein is DNA-binding protein Bv3F.